We begin with the raw amino-acid sequence, 628 residues long: Monoterpene synthase like 1, chloroplastic (628 aa).

D379, D383, and D531 together coordinate Mg(2+). The DDXXD motif motif lies at 379 to 383 (DDIYD).

This sequence belongs to the terpene synthase family. Tpsd subfamily. Mg(2+) serves as cofactor. Mn(2+) is required as a cofactor.

It localises to the plastid. The protein resides in the chloroplast. It functions in the pathway terpene metabolism; oleoresin biosynthesis. Its pathway is secondary metabolite biosynthesis; terpenoid biosynthesis. In terms of biological role, monoterpene synthase (TPS) involved in the biosynthesis of monoterpene natural products included in conifer oleoresin secretions and volatile emissions; these compounds contribute to biotic and abiotic stress defense against herbivores and pathogens. In Pinus banksiana (Jack pine), this protein is Monoterpene synthase like 1, chloroplastic.